The chain runs to 245 residues: ATP synthase subunit a, chloroplastic (245 aa).

5 helical membrane-spanning segments follow: residues 34-54 (TLMT…LSNL), 93-113 (VPFL…GALL), 132-152 (INTT…AGIS), 197-217 (LVIA…LMLL), and 218-238 (GLFT…AYIG).

This sequence belongs to the ATPase A chain family. As to quaternary structure, F-type ATPases have 2 components, CF(1) - the catalytic core - and CF(0) - the membrane proton channel. CF(1) has five subunits: alpha(3), beta(3), gamma(1), delta(1), epsilon(1). CF(0) has four main subunits: a, b, b' and c.

The protein localises to the plastid. It localises to the chloroplast thylakoid membrane. Functionally, key component of the proton channel; it plays a direct role in the translocation of protons across the membrane. This Bigelowiella natans (Pedinomonas minutissima) protein is ATP synthase subunit a, chloroplastic.